We begin with the raw amino-acid sequence, 355 residues long: MPVLHNRISNEELKARMLAETEPRTTVSFYKYFTLEDAKTFRDNLYSQFVKLGVFGRVYVAKEGINAQISVPANRYDEFKIALFASHPALDQVRLNVAHEDDGKSFWVLRLKVRERIVADGIDDDSFDPANIGHYLKADQVNQMIDDPDTLFVDMRNHYEYEVGHFENAIEVPSDTFREQLPMAVDMLQHDKEKNIVMYCTGGIRCEKASAYMLHNGFKNVYHVEGGIIEYARKAKEQGLPLKFIGKNFVFDERMGERISDDVIAHCHQCGTPCDAHTNCKNDGCHLLFIQCPVCAAKFEGCCSQICQEELKLPQEEQRSRRAGRENGIKIFNKSKGLLQATMHIPSPEKSADEK.

The 95-residue stretch at aspartate 146–leucine 240 folds into the Rhodanese domain. Residue cysteine 200 is the Cysteine persulfide intermediate of the active site. The disordered stretch occupies residues asparagine 333–lysine 355.

Belongs to the TrhO family.

It carries out the reaction uridine(34) in tRNA + AH2 + O2 = 5-hydroxyuridine(34) in tRNA + A + H2O. Functionally, catalyzes oxygen-dependent 5-hydroxyuridine (ho5U) modification at position 34 in tRNAs. The polypeptide is tRNA uridine(34) hydroxylase (Yersinia pseudotuberculosis serotype O:1b (strain IP 31758)).